Reading from the N-terminus, the 461-residue chain is Photosynthetic NDH subunit of subcomplex B 1, chloroplastic (461 aa).

Residues 1-44 (MASSLPLLPKPISPFFKTPPFSTSKPLVFLNFQTRLTSRSSDVS) constitute a chloroplast transit peptide. The segment at 66–90 (NEYGSLFADGKQDEDPRPPDNPDNP) is disordered. The segment covering 75-85 (GKQDEDPRPPD) has biased composition (basic and acidic residues).

As to quaternary structure, part of the chloroplast NDH complex, composed of a mixture of chloroplast and nucleus encoded subunits. Component of the NDH subcomplex B, at least composed of PnsB1, PnsB2, PnsB3, PnsB4 and PnsB5.

It localises to the plastid. The protein resides in the chloroplast thylakoid membrane. NDH shuttles electrons from NAD(P)H:plastoquinone, via FMN and iron-sulfur (Fe-S) centers, to quinones in the photosynthetic chain and possibly in a chloroplast respiratory chain. The immediate electron acceptor for the enzyme in this species is believed to be plastoquinone. Couples the redox reaction to proton translocation, and thus conserves the redox energy in a proton gradient. This Arabidopsis thaliana (Mouse-ear cress) protein is Photosynthetic NDH subunit of subcomplex B 1, chloroplastic.